We begin with the raw amino-acid sequence, 230 residues long: Cutinase (230 aa).

The first 16 residues, 1–16 (MKFFALTTFLAATASA), serve as a signal peptide directing secretion. A disulfide bridge links C47 with C125. S136 serves as the catalytic Nucleophile. An intrachain disulfide couples C187 to C194. The active site involves D191. The Proton donor/acceptor role is filled by H204.

Belongs to the cutinase family. In terms of processing, the 2 disulfide bonds play a critical role in holding the catalytic residues in juxta-position; reduction of the disulfide bridges results in the complete inactivation of the enzyme.

It is found in the secreted. It catalyses the reaction cutin + H2O = cutin monomers.. Functionally, catalyzes the hydrolysis of complex carboxylic polyesters found in the cell wall of plants. Degrades cutin, a macromolecule that forms the structure of the plant cuticle. Allows pathogenic fungi to penetrate through the cuticular barrier into the host plant during the initial stage of fungal infection. The protein is Cutinase (CUTA) of Fusarium solani subsp. cucurbitae (Neocosmosporum cucurbitae).